A 63-amino-acid polypeptide reads, in one-letter code: ORF6 protein (63 aa).

It belongs to the coronaviruses accessory protein 6 family.

The protein resides in the host endoplasmic reticulum membrane. It is found in the host Golgi apparatus membrane. In terms of biological role, could be a determinant of virus virulence. Seems to stimulate cellular DNA synthesis in vitro. This chain is ORF6 protein, found in Rhinolophus macrotis (Big-eared horseshoe bat).